We begin with the raw amino-acid sequence, 201 residues long: Recombination protein RecR (201 aa).

A C4-type zinc finger spans residues 56–71 (CKICFNVSSDEVCQYC). The Toprim domain occupies 79–174 (SMICVVEESK…TVSRLASGLP (96 aa)).

Belongs to the RecR family.

Functionally, may play a role in DNA repair. It seems to be involved in an RecBC-independent recombinational process of DNA repair. It may act with RecF and RecO. In Cutibacterium acnes (strain DSM 16379 / KPA171202) (Propionibacterium acnes), this protein is Recombination protein RecR.